We begin with the raw amino-acid sequence, 466 residues long: tRNA modification GTPase MnmE (466 aa).

Residues Arg-23, Glu-86, and Lys-125 each coordinate (6S)-5-formyl-5,6,7,8-tetrahydrofolate. Residues 221 to 388 (GIPVAIVGEP…LKNELLSFVN (168 aa)) form the TrmE-type G domain. Asn-231 contacts K(+). GTP-binding positions include 231-236 (NVGKST), 250-256 (SDIAGTT), and 275-278 (DTAG). Ser-235 is a Mg(2+) binding site. Positions 250, 252, and 255 each coordinate K(+). Thr-256 contacts Mg(2+). Position 466 (Lys-466) interacts with (6S)-5-formyl-5,6,7,8-tetrahydrofolate.

It belongs to the TRAFAC class TrmE-Era-EngA-EngB-Septin-like GTPase superfamily. TrmE GTPase family. In terms of assembly, homodimer. Heterotetramer of two MnmE and two MnmG subunits. The cofactor is K(+).

It localises to the cytoplasm. Functionally, exhibits a very high intrinsic GTPase hydrolysis rate. Involved in the addition of a carboxymethylaminomethyl (cmnm) group at the wobble position (U34) of certain tRNAs, forming tRNA-cmnm(5)s(2)U34. The chain is tRNA modification GTPase MnmE from Flavobacterium johnsoniae (strain ATCC 17061 / DSM 2064 / JCM 8514 / BCRC 14874 / CCUG 350202 / NBRC 14942 / NCIMB 11054 / UW101) (Cytophaga johnsonae).